The following is a 263-amino-acid chain: Alpha-tubulin N-acetyltransferase 2 (263 aa).

The N-acetyltransferase domain maps to 1 to 181; that stretch reads MEIAFDLSTI…NKYALCSNFF (181 aa). 115–128 serves as a coordination point for acetyl-CoA; sequence FFVVPTEQRSGNGF. Disordered regions lie at residues 191-223 and 242-263; these read TPRQ…NRPR and EVDP…RRIW. Positions 200-212 are enriched in low complexity; that stretch reads RASSAVSSHASSR. Over residues 253–263 the composition is skewed to basic and acidic residues; the sequence is NARDFGHRRIW.

It belongs to the acetyltransferase ATAT1 family. As to expression, expressed in touch receptor neurons and in a subset of ciliated neurons, including PDE, ADE, CEP, and OLQ neurons.

The enzyme catalyses L-lysyl-[alpha-tubulin] + acetyl-CoA = N(6)-acetyl-L-lysyl-[alpha-tubulin] + CoA + H(+). Its function is as follows. Specifically acetylates 'Lys-40' in alpha-tubulin/mec-12 on the lumenal side of microtubules. Promotes microtubule destabilization and accelerates microtubule dynamics; this activity may be independent of acetylation activity. Acetylates alpha-tubulin with a slow enzymatic rate, due to a catalytic site that is not optimized for acetyl transfer. Enters the microtubule through each end and diffuses quickly throughout the lumen of microtubules. Acetylates only long/old microtubules because of its slow acetylation rate since it does not have time to act on dynamically unstable microtubules before the enzyme is released. Required for the maintenance of touch receptor neurons and possibly other type of neurons involved in locomotion. In Caenorhabditis elegans, this protein is Alpha-tubulin N-acetyltransferase 2 (atat-2).